Reading from the N-terminus, the 372-residue chain is Cyclin-dependent kinase 9 (372 aa).

The Protein kinase domain occupies 19–315 (YEKLAKIGQG…SDDALNHDFF (297 aa)). 25-33 (IGQGTFGEV) lines the ATP pocket. N6-acetyllysine; by EP300/CBP, PCAF/KAT2B and GCN5/KAT2A is present on lysine 44. ATP is bound by residues lysine 48 and 104–106 (DFC). At lysine 48 the chain carries N6-acetyllysine; by PCAF/KAT2B and GCN5/KAT2A. The Proton acceptor role is filled by aspartate 149. Residues 166–191 (ADFGLARAFSLAKNSQPNRYTNRVVT) form a T-loop region. An ATP-binding site is contributed by aspartate 167. Residue serine 175 is modified to Phosphoserine. Threonine 186 carries the phosphothreonine; by CaMK1D modification. The segment at 343-372 (RRKGSQITQQSTNQSRNPATTNQTEFERVF) is disordered. A Phosphoserine; by CDK9 and PKA modification is found at serine 347. Positions 347–366 (SQITQQSTNQSRNPATTNQT) are enriched in polar residues. Threonine 350 is modified (phosphothreonine; by CDK9). A Phosphoserine; by CDK9 modification is found at serine 353. Residue threonine 354 is modified to Phosphothreonine; by CDK9. Serine 357 is subject to Phosphoserine; by CDK9. A phosphothreonine; by CDK9 mark is found at threonine 362 and threonine 363.

It belongs to the protein kinase superfamily. CMGC Ser/Thr protein kinase family. CDC2/CDKX subfamily. Component of the super elongation complex (SEC), at least composed of EAF1, EAF2, CDK9, MLLT3/AF9, AFF (AFF1 or AFF4), the P-TEFb complex and ELL (ELL, ELL2 or ELL3). Associates with CCNT1/cyclin-T1, CCNT2/cyclin-T2 (isoform A and isoform B) or CCNK/cyclin-K to form active P-TEFb. P-TEFb forms a complex with AFF4/AF5Q31 and is part of the super elongation complex (SEC). Component of a complex which is composed of at least 5 members: HTATSF1/Tat-SF1, P-TEFb complex, RNA pol II, SUPT5H, and NCL/nucleolin. Associates with UBR5 and forms a transcription regulatory complex composed of CDK9, RNAP II, UBR5 and TFIIS/TCEA1 that can stimulate target gene transcription (e.g. gamma fibrinogen/FGG) by recruiting their promoters. Component of the 7SK snRNP inactive complex which is composed of at least 8 members: P-TEFb (composed of CDK9 and CCNT1/cyclin-T1), HEXIM1, HEXIM2, LARP7, BCDIN3, SART3 proteins and 7SK and U6 snRNAs. This inactive 7SK snRNP complex can also interact with NCOR1 and HDAC3, probably to regulate CDK9 acetylation. Release of P-TEFb from P-TEFb/7SK snRNP complex requires both PP2B to transduce calcium Ca(2+) signaling in response to stimuli (e.g. UV or hexamethylene bisacetamide (HMBA)), and PPP1CA to dephosphorylate Thr-186. This released P-TEFb remains inactive in the pre-initiation complex with BRD4 until new Thr-186 phosphorylation occurs after the synthesis of a short RNA. Interacts with BRD4; to target chromatin binding. Interacts with JMJD6. Interacts with activated nuclear STAT3 and RELA/p65. Binds to AR and MYOD1. Forms a complex composed of CDK9, CCNT1/cyclin-T1, EP300 and GATA4 that stimulates hypertrophy in cardiomyocytes. The large PER complex involved in the repression of transcriptional termination is composed of at least PER2, CDK9, DDX5, DHX9, NCBP1 and POLR2A (active). Interacts with HSF1. Interacts with TBX21. Interacts with WDR43. Interacts with ZMYND8; the association appears to occur between homodimeric ZMYND8 and the activated form of the P-TEFb complex. Post-translationally, autophosphorylation at Thr-186, Ser-347, Thr-350, Ser-353, Thr-354 and Ser-357 triggers kinase activity by promoting cyclin and substrate binding upon conformational changes. Thr-186 phosphorylation requires the calcium Ca(2+) signaling pathway, including CaMK1D and calmodulin. This inhibition is relieved by Thr-29 dephosphorylation. Phosphorylation at Ser-175 inhibits kinase activity. Can be phosphorylated on either Thr-362 or Thr-363 but not on both simultaneously. In terms of processing, dephosphorylation of Thr-186 by PPM1A and PPM1B blocks CDK9 activity and may lead to CDK9 proteasomal degradation. However, PPP1CA-mediated Thr-186 dephosphorylation is required to release P-TEFb from its inactive P-TEFb/7SK snRNP complex. Dephosphorylated at Ser-347 by the PNUTS-PP1 complex during RNA polymerase II transcription pause-release. Dephosphorylation of C-terminus Thr and Ser residues by protein phosphatase-1 (PP1) triggers CDK9 activity. N6-acetylation of Lys-44 promotes kinase activity, whereas acetylation of both Lys-44 and Lys-48 mediated by PCAF/KAT2B and GCN5/KAT2A reduces kinase activity. The acetylated form associates with PML bodies in the nuclear matrix and with the transcriptionally silent HIV-1 genome; deacetylated upon transcription stimulation. Deacetylated by SIRT7, promoting the kinase activity and subsequent 'Ser-2' phosphorylation of the C-terminal domain (CTD) of RNA polymerase II. Post-translationally, polyubiquitinated and thus activated by UBR5. This ubiquitination is promoted by TFIIS/TCEA1 and favors 'Ser-2' phosphorylation of RPB1/POLR2A CTD. In terms of tissue distribution, expressed at high levels in brain and kidney.

The protein localises to the nucleus. The protein resides in the cytoplasm. It localises to the PML body. The enzyme catalyses L-seryl-[protein] + ATP = O-phospho-L-seryl-[protein] + ADP + H(+). The catalysed reaction is L-threonyl-[protein] + ATP = O-phospho-L-threonyl-[protein] + ADP + H(+). It carries out the reaction [DNA-directed RNA polymerase] + ATP = phospho-[DNA-directed RNA polymerase] + ADP + H(+). With respect to regulation, activation by Thr-186 phosphorylation is calcium Ca(2+) signaling pathway-dependent; actively inactivated by dephosphorylation mediated by PPP1CA, PPM1A and PPM1B. Reversibly repressed by acetylation at Lys-44 and Lys-48. Its function is as follows. Protein kinase involved in the regulation of transcription. Member of the cyclin-dependent kinase pair (CDK9/cyclin-T) complex, also called positive transcription elongation factor b (P-TEFb), which facilitates the transition from abortive to productive elongation by phosphorylating the CTD (C-terminal domain) of the large subunit of RNA polymerase II (RNAP II) POLR2A, SUPT5H and RDBP. This complex is inactive when in the 7SK snRNP complex form. Phosphorylates EP300, MYOD1, RPB1/POLR2A and AR and the negative elongation factors DSIF and NELFE. Regulates cytokine inducible transcription networks by facilitating promoter recognition of target transcription factors (e.g. TNF-inducible RELA/p65 activation and IL-6-inducible STAT3 signaling). Promotes RNA synthesis in genetic programs for cell growth, differentiation and viral pathogenesis. P-TEFb is also involved in cotranscriptional histone modification, mRNA processing and mRNA export. Modulates a complex network of chromatin modifications including histone H2B monoubiquitination (H2Bub1), H3 lysine 4 trimethylation (H3K4me3) and H3K36me3; integrates phosphorylation during transcription with chromatin modifications to control co-transcriptional histone mRNA processing. The CDK9/cyclin-K complex has also a kinase activity towards CTD of RNAP II and can substitute for CDK9/cyclin-T P-TEFb in vitro. Replication stress response protein; the CDK9/cyclin-K complex is required for genome integrity maintenance, by promoting cell cycle recovery from replication arrest and limiting single-stranded DNA amount in response to replication stress, thus reducing the breakdown of stalled replication forks and avoiding DNA damage. In addition, probable function in DNA repair of isoform 2 via interaction with KU70/XRCC6. Promotes cardiac myocyte enlargement. RPB1/POLR2A phosphorylation on 'Ser-2' in CTD activates transcription. AR phosphorylation modulates AR transcription factor promoter selectivity and cell growth. DSIF and NELF phosphorylation promotes transcription by inhibiting their negative effect. The phosphorylation of MYOD1 enhances its transcriptional activity and thus promotes muscle differentiation. Catalyzes phosphorylation of KAT5, promoting KAT5 recruitment to chromatin and histone acetyltransferase activity. The polypeptide is Cyclin-dependent kinase 9 (Cdk9) (Mus musculus (Mouse)).